Reading from the N-terminus, the 466-residue chain is Neuraminidase (466 aa).

The Intravirion portion of the chain corresponds to 1-8; that stretch reads MLPSTIQT. The helical transmembrane segment at 9–31 threads the bilayer; sequence LTLFLTSGGVLLSLYVSASLSYL. Positions 13-35 are involved in apical transport and lipid raft association; that stretch reads LTSGGVLLSLYVSASLSYLLYSD. Topologically, residues 32 to 466 are virion surface; that stretch reads LYSDILLKFS…DTVTGVDMAL (435 aa). Residues 38-86 are hypervariable stalk region; that stretch reads LKFSPTEITAPKVPLDCANASNVQAVNRSATKGMTLLLSEPEWTYPRLS. N-linked (GlcNAc...) asparagine; by host glycosylation is found at Asn56 and Asn64. Cystine bridges form between Cys87–Cys420, Cys122–Cys127, Cys182–Cys229, Cys231–Cys236, Cys277–Cys291, Cys279–Cys289, Cys318–Cys337, and Cys424–Cys447. The interval 89–466 is head of neuraminidase; that stretch reads GSTFQKALLI…DTVTGVDMAL (378 aa). A substrate-binding site is contributed by Arg116. N-linked (GlcNAc...) asparagine; by host glycosylation is present at Asn144. Asp149 functions as the Proton donor/acceptor in the catalytic mechanism. Arg150 contacts substrate. 275–276 is a binding site for substrate; the sequence is EE. Asn284 is a glycosylation site (N-linked (GlcNAc...) asparagine; by host). Position 292 (Arg292) interacts with substrate. The Ca(2+) site is built by Asp293 and Asp324. Arg374 provides a ligand contact to substrate. Catalysis depends on Tyr409, which acts as the Nucleophile.

It belongs to the glycosyl hydrolase 34 family. Homotetramer. Requires Ca(2+) as cofactor. N-glycosylated.

The protein localises to the virion membrane. Its subcellular location is the host apical cell membrane. It catalyses the reaction Hydrolysis of alpha-(2-&gt;3)-, alpha-(2-&gt;6)-, alpha-(2-&gt;8)- glycosidic linkages of terminal sialic acid residues in oligosaccharides, glycoproteins, glycolipids, colominic acid and synthetic substrates.. Inhibited by the neuraminidase inhibitors zanamivir (Relenza) and oseltamivir (Tamiflu). These drugs interfere with the release of progeny virus from infected cells and are effective against all influenza strains. Resistance to neuraminidase inhibitors is quite rare. Functionally, catalyzes the removal of terminal sialic acid residues from viral and cellular glycoconjugates. Cleaves off the terminal sialic acids on the glycosylated HA during virus budding to facilitate virus release. Additionally helps virus spread through the circulation by further removing sialic acids from the cell surface. These cleavages prevent self-aggregation and ensure the efficient spread of the progeny virus from cell to cell. Otherwise, infection would be limited to one round of replication. Described as a receptor-destroying enzyme because it cleaves a terminal sialic acid from the cellular receptors. May facilitate viral invasion of the upper airways by cleaving the sialic acid moieties on the mucin of the airway epithelial cells. Likely to plays a role in the budding process through its association with lipid rafts during intracellular transport. May additionally display a raft-association independent effect on budding. Plays a role in the determination of host range restriction on replication and virulence. Sialidase activity in late endosome/lysosome traffic seems to enhance virus replication. The sequence is that of Neuraminidase from Homo sapiens (Human).